The following is a 197-amino-acid chain: GTP cyclohydrolase-2 (197 aa).

50 to 54 (RIHSE) contributes to the GTP binding site. Positions 55, 66, and 68 each coordinate Zn(2+). GTP is bound by residues glutamine 71, 93–95 (EGR), and threonine 115. Aspartate 127 functions as the Proton acceptor in the catalytic mechanism. Arginine 129 acts as the Nucleophile in catalysis. 2 residues coordinate GTP: threonine 150 and lysine 155.

The protein belongs to the GTP cyclohydrolase II family. Zn(2+) serves as cofactor.

The catalysed reaction is GTP + 4 H2O = 2,5-diamino-6-hydroxy-4-(5-phosphoribosylamino)-pyrimidine + formate + 2 phosphate + 3 H(+). It functions in the pathway cofactor biosynthesis; riboflavin biosynthesis; 5-amino-6-(D-ribitylamino)uracil from GTP: step 1/4. Functionally, catalyzes the conversion of GTP to 2,5-diamino-6-ribosylamino-4(3H)-pyrimidinone 5'-phosphate (DARP), formate and pyrophosphate. The polypeptide is GTP cyclohydrolase-2 (Tolumonas auensis (strain DSM 9187 / NBRC 110442 / TA 4)).